The sequence spans 182 residues: Transcription repressor OFP11 (182 aa).

The tract at residues 62–94 is disordered; it reads PLHRRHSSENPAGVFSTNRREEEEEDETTTSVS. One can recognise an OVATE domain in the interval 104–169; the sequence is MKHIESPDPY…VSAFADTLLW (66 aa).

As to expression, expressed in roots, rosette and cauline leaves, shoots, stems, flower buds and siliques.

The protein localises to the nucleus. Its function is as follows. Transcriptional repressor that may regulate multiple aspects of plant growth and development through the regulation of BEL1-LIKE (BLH) and KNOX TALE (KNAT) homeodomain transcription factors. This chain is Transcription repressor OFP11 (OFP11), found in Arabidopsis thaliana (Mouse-ear cress).